The chain runs to 153 residues: Pheromone-binding protein Gp-9 (153 aa).

The first 19 residues, 1 to 19, serve as a signal peptide directing secretion; that stretch reads MKTFVLHIFIFALVAFASA. Intrachain disulfides connect Cys37-Cys77, Cys73-Cys129, and Cys118-Cys138.

It belongs to the PBP/GOBP family. Homodimer.

It is found in the secreted. Colony queen number, a major feature of social organization, is associated with worker genotype for Gp-9. Colonies are headed by either a single reproductive queen (monogyne form) or multiple queens (polygyne form). Differences in worker Gp-9 genotypes between social forms may cause differences in workers' abilities to recognize queens and regulate their numbers. In Solenopsis invicta (Red imported fire ant), this protein is Pheromone-binding protein Gp-9.